Consider the following 89-residue polypeptide: GTP cyclohydrolase 1 feedback regulatory protein (89 aa).

Belongs to the GFRP family. In terms of assembly, homopentamer. Forms a complex with GCH1 where a GCH1 homodecamer is sandwiched by two GFRP homopentamers.

It is found in the nucleus. Its subcellular location is the nucleus membrane. The protein localises to the cytoplasm. It localises to the cytosol. Functionally, mediates tetrahydrobiopterin inhibition of GTP cyclohydrolase 1. The chain is GTP cyclohydrolase 1 feedback regulatory protein (gchfr) from Danio rerio (Zebrafish).